A 172-amino-acid chain; its full sequence is Protein GrpE (172 aa).

Residues 1–23 (MNQDHPEFDSEDLSQNPPETDPL) are disordered.

Belongs to the GrpE family. Homodimer.

It is found in the cytoplasm. Participates actively in the response to hyperosmotic and heat shock by preventing the aggregation of stress-denatured proteins, in association with DnaK and GrpE. It is the nucleotide exchange factor for DnaK and may function as a thermosensor. Unfolded proteins bind initially to DnaJ; upon interaction with the DnaJ-bound protein, DnaK hydrolyzes its bound ATP, resulting in the formation of a stable complex. GrpE releases ADP from DnaK; ATP binding to DnaK triggers the release of the substrate protein, thus completing the reaction cycle. Several rounds of ATP-dependent interactions between DnaJ, DnaK and GrpE are required for fully efficient folding. The polypeptide is Protein GrpE (Xanthomonas axonopodis pv. citri (strain 306)).